A 352-amino-acid polypeptide reads, in one-letter code: Large ribosomal subunit protein uL10 (352 aa).

Residues 286 to 297 (DDEDALPEELQD) are compositionally biased toward acidic residues. Positions 286-352 (DDEDALPEEL…GAEGLGEMFG (67 aa)) are disordered. The segment covering 299 to 310 (DAPAAPAGGEAD) has biased composition (low complexity). Residues 324-340 (EADDADDSDDDDDDDDG) are compositionally biased toward acidic residues. Residues 343 to 352 (GAEGLGEMFG) are compositionally biased toward gly residues.

This sequence belongs to the universal ribosomal protein uL10 family. In terms of assembly, part of the 50S ribosomal subunit. Forms part of the ribosomal stalk which helps the ribosome interact with GTP-bound translation factors. Forms a heptameric L10(L12)2(L12)2(L12)2 complex, where L10 forms an elongated spine to which the L12 dimers bind in a sequential fashion.

In terms of biological role, forms part of the ribosomal stalk, playing a central role in the interaction of the ribosome with GTP-bound translation factors. In Halobacterium salinarum (strain ATCC 700922 / JCM 11081 / NRC-1) (Halobacterium halobium), this protein is Large ribosomal subunit protein uL10.